The following is a 240-amino-acid chain: Purine nucleoside phosphorylase DeoD-type (240 aa).

H5 contacts a purine D-ribonucleoside. Phosphate is bound by residues G21, R25, R44, and 88–91; that span reads RVGS. A purine D-ribonucleoside is bound by residues 180–182 and 204–205; these read EME and SD. D205 (proton donor) is an active-site residue.

Belongs to the PNP/UDP phosphorylase family. As to quaternary structure, homohexamer; trimer of homodimers.

It carries out the reaction a purine D-ribonucleoside + phosphate = a purine nucleobase + alpha-D-ribose 1-phosphate. The catalysed reaction is a purine 2'-deoxy-D-ribonucleoside + phosphate = a purine nucleobase + 2-deoxy-alpha-D-ribose 1-phosphate. Functionally, catalyzes the reversible phosphorolytic breakdown of the N-glycosidic bond in the beta-(deoxy)ribonucleoside molecules, with the formation of the corresponding free purine bases and pentose-1-phosphate. This Actinobacillus pleuropneumoniae serotype 5b (strain L20) protein is Purine nucleoside phosphorylase DeoD-type.